A 392-amino-acid chain; its full sequence is Tryptophan synthase beta chain (392 aa).

Lysine 84 is subject to N6-(pyridoxal phosphate)lysine.

The protein belongs to the TrpB family. In terms of assembly, tetramer of two alpha and two beta chains. Pyridoxal 5'-phosphate serves as cofactor.

The catalysed reaction is (1S,2R)-1-C-(indol-3-yl)glycerol 3-phosphate + L-serine = D-glyceraldehyde 3-phosphate + L-tryptophan + H2O. Its pathway is amino-acid biosynthesis; L-tryptophan biosynthesis; L-tryptophan from chorismate: step 5/5. Functionally, the beta subunit is responsible for the synthesis of L-tryptophan from indole and L-serine. This is Tryptophan synthase beta chain from Campylobacter jejuni subsp. doylei (strain ATCC BAA-1458 / RM4099 / 269.97).